The following is a 601-amino-acid chain: Deuterosome assembly protein 1 (601 aa).

Coiled-coil stretches lie at residues 14-59 (CEAE…NAQT), 86-197 (TQNY…KQQR), and 226-278 (IEKL…LQSR). 2 disordered regions span residues 115 to 135 (MKQN…PFEL) and 188 to 213 (QTQL…CESS). Residues 121–131 (HRKEASNKDET) show a composition bias toward basic and acidic residues. The segment at 307–326 (DNRKRVESSYSPSTKEPERK) is disordered. Residues 340–397 (HEKELNKMRSQLYQEEDLCSEQERMRNEISELTQELHQKEVTIATIMKKAALLERQLK) adopt a coiled-coil conformation. A Phosphoserine modification is found at Ser-544. Positions 555–586 (AAQHFLMEEEKRAKELEKLLNTHIDELQRHTE) form a coiled coil.

This sequence belongs to the CEP63 family. In terms of assembly, interacts with CEP152; the interaction is mutually exclusive with CEP63.

It is found in the cytoplasm. Key structural component of the deuterosome, a structure that promotes de novo centriole amplification in multiciliated cells. Deuterosome-mediated centriole amplification occurs in terminally differentiated multiciliated cells and can generate more than 100 centrioles. Probably sufficient for the specification and formation of the deuterosome inner core. Interacts with CEP152 and recruits PLK4 to activate centriole biogenesis. The polypeptide is Deuterosome assembly protein 1 (Rattus norvegicus (Rat)).